Reading from the N-terminus, the 545-residue chain is Chaperonin GroEL (545 aa).

ATP-binding positions include 30–33 (TLGP), K51, 87–91 (DGTTT), G415, 479–481 (NAA), and D495. Residues 526-545 (KEDKPDLGNAGAGGNMGGMM) form a disordered region. Over residues 535–545 (AGAGGNMGGMM) the composition is skewed to gly residues.

The protein belongs to the chaperonin (HSP60) family. In terms of assembly, forms a cylinder of 14 subunits composed of two heptameric rings stacked back-to-back. Interacts with the co-chaperonin GroES.

The protein resides in the cytoplasm. The catalysed reaction is ATP + H2O + a folded polypeptide = ADP + phosphate + an unfolded polypeptide.. Functionally, together with its co-chaperonin GroES, plays an essential role in assisting protein folding. The GroEL-GroES system forms a nano-cage that allows encapsulation of the non-native substrate proteins and provides a physical environment optimized to promote and accelerate protein folding. The chain is Chaperonin GroEL from Blochmanniella pennsylvanica (strain BPEN).